Here is a 205-residue protein sequence, read N- to C-terminus: Methylamine utilization protein MauD (205 aa).

A helical membrane pass occupies residues 5 to 25; it reads IMIASNVLLWGAFLALAALML. The Thioredoxin domain maps to 50-184; it reads PDIGERSPVF…VESLFETTRV (135 aa).

Its subcellular location is the membrane. Its pathway is one-carbon metabolism; methylamine degradation. In terms of biological role, may be specifically involved in the processing, transport, and/or maturation of the MADH beta-subunit. This chain is Methylamine utilization protein MauD (mauD), found in Methylobacillus flagellatus (strain ATCC 51484 / DSM 6875 / VKM B-1610 / KT).